The primary structure comprises 1113 residues: uncharacterized protein (1113 aa).

Position 313 to 320 (313 to 320 (GPPGTGKS)) interacts with ATP.

The protein belongs to the DNA2/NAM7 helicase family.

This is an uncharacterized protein from Mycoplasma pneumoniae (strain ATCC 29342 / M129 / Subtype 1) (Mycoplasmoides pneumoniae).